We begin with the raw amino-acid sequence, 195 residues long: Sec-independent protein translocase protein TatB (195 aa).

A helical transmembrane segment spans residues 2-22 (FSNVGWGEVLVLLIVALFLIG). Residues 103 to 125 (VKDTVDTVRKPNLRESLKADKTK) show a composition bias toward basic and acidic residues. The disordered stretch occupies residues 103 to 195 (VKDTVDTVRK…APGYGWEDVT (93 aa)). 2 stretches are compositionally biased toward polar residues: residues 127–139 (SAQP…SGSA) and 146–155 (VTQQSNAGES).

This sequence belongs to the TatB family. As to quaternary structure, the Tat system comprises two distinct complexes: a TatABC complex, containing multiple copies of TatA, TatB and TatC subunits, and a separate TatA complex, containing only TatA subunits. Substrates initially bind to the TatABC complex, which probably triggers association of the separate TatA complex to form the active translocon.

The protein localises to the cell membrane. Its function is as follows. Part of the twin-arginine translocation (Tat) system that transports large folded proteins containing a characteristic twin-arginine motif in their signal peptide across membranes. Together with TatC, TatB is part of a receptor directly interacting with Tat signal peptides. TatB may form an oligomeric binding site that transiently accommodates folded Tat precursor proteins before their translocation. The protein is Sec-independent protein translocase protein TatB of Corynebacterium jeikeium (strain K411).